A 529-amino-acid polypeptide reads, in one-letter code: Phenylalanine N-monooxygenase (529 aa).

The chain crosses the membrane as a helical span at residues 1–21; it reads MLDSTPMLAFIIGLLLLALTM. C467 provides a ligand contact to heme.

It belongs to the cytochrome P450 family. It depends on heme as a cofactor.

It is found in the endoplasmic reticulum membrane. The catalysed reaction is L-phenylalanine + 2 reduced [NADPH--hemoprotein reductase] + 2 O2 = (E)-phenylacetaldehyde oxime + 2 oxidized [NADPH--hemoprotein reductase] + CO2 + 3 H2O + 2 H(+). The protein operates within secondary metabolite biosynthesis; phenylglucosinolate biosynthesis. Its function is as follows. Converts L-phenylalanine into phenylacetaldoxime, the precursor of benzylglucosinolate (glucotropeolin). In Arabidopsis thaliana (Mouse-ear cress), this protein is Phenylalanine N-monooxygenase (CYP79A2).